Here is a 152-residue protein sequence, read N- to C-terminus: Ribosome maturation factor RimP (152 aa).

Belongs to the RimP family.

It is found in the cytoplasm. Functionally, required for maturation of 30S ribosomal subunits. This is Ribosome maturation factor RimP from Alkaliphilus metalliredigens (strain QYMF).